Reading from the N-terminus, the 304-residue chain is Oxygen-dependent coproporphyrinogen-III oxidase (304 aa).

A substrate-binding site is contributed by serine 94. A divalent metal cation-binding residues include histidine 98 and histidine 108. The active-site Proton donor is histidine 108. A substrate-binding site is contributed by 110–112 (NVR). Positions 147 and 177 each coordinate a divalent metal cation. Residues 242–277 (YVEFNLVWDRGTLFGLQSGGRTESVLMSMPPLARWQ) form an important for dimerization region. Substrate is bound at residue 260–262 (GGR).

It belongs to the aerobic coproporphyrinogen-III oxidase family. Homodimer. The cofactor is a divalent metal cation.

The protein resides in the cytoplasm. It catalyses the reaction coproporphyrinogen III + O2 + 2 H(+) = protoporphyrinogen IX + 2 CO2 + 2 H2O. It functions in the pathway porphyrin-containing compound metabolism; protoporphyrin-IX biosynthesis; protoporphyrinogen-IX from coproporphyrinogen-III (O2 route): step 1/1. Involved in the heme biosynthesis. Catalyzes the aerobic oxidative decarboxylation of propionate groups of rings A and B of coproporphyrinogen-III to yield the vinyl groups in protoporphyrinogen-IX. In Sodalis glossinidius (strain morsitans), this protein is Oxygen-dependent coproporphyrinogen-III oxidase.